The primary structure comprises 565 residues: Maturase K (565 aa).

It belongs to the intron maturase 2 family. MatK subfamily.

It localises to the plastid. Its subcellular location is the chloroplast. In terms of biological role, usually encoded in the trnK tRNA gene intron. Probably assists in splicing its own and other chloroplast group II introns. The sequence is that of Maturase K from Staurastrum punctulatum (Green alga).